The chain runs to 992 residues: Disks large-associated protein 1 (992 aa).

2 disordered regions span residues 150–209 (TKSH…SWWS) and 355–376 (KAMG…PKVA). S169 is subject to Phosphoserine. Positions 194–209 (RSNASNASPTSPSWWS) are enriched in low complexity. Phosphoserine occurs at positions 362, 365, 368, 372, 389, 418, 421, 425, 428, 437, 509, 516, and 578. A Phosphothreonine modification is found at T579. 2 positions are modified to phosphoserine: S581 and S605. T606 is subject to Phosphothreonine. 2 positions are modified to phosphoserine: S608 and S611. Interaction with DYL2 regions lie at residues 665 to 676 (LSIGIQVDDAEE) and 687 to 698 (NKFQSVGVQVEE). Residues 914-980 (WKQMDPLDKK…QNSATESAES (67 aa)) are disordered. 2 stretches are compositionally biased toward basic and acidic residues: residues 918–927 (DPLDKKERRA) and 943–958 (IRER…EARK). At S947 the chain carries Phosphoserine. Over residues 969-978 (VRQNSATESA) the composition is skewed to polar residues. The PDZ-binding signature appears at 990-992 (TRL).

This sequence belongs to the SAPAP family. As to quaternary structure, interacts with the guanylate kinase-like domain of DLG1, DLG2, DLG3, DLG4 and AIP1. Interacts with the PDZ domain of SHANK1, SHANK2 and SHANK3. Found in a complex with DLG4 and SHANK1, SHANK2 or SHANK3. Found in a complex with DLG4 and BEGAIN. Interacts with DYL2 and LRFN1. Interacts with MPP2 (via the SH3-Guanylate kinase-like sub-module). Ubiquitinated by TRIM3; leading to proteasomal degradation. Highest levels in the neocortex, part of the hippocampus, the granule cell layer of the cerebellum, the glomerular layer of the olfactory bulb, the inner plexiform layer of the retina, the ventral and dorsal horn of the spinal cord, the neuromuscular junction and the submandibular ganglion.

The protein resides in the cell membrane. It is found in the postsynaptic density. Its subcellular location is the synapse. Part of the postsynaptic scaffold in neuronal cells. The sequence is that of Disks large-associated protein 1 (Dlgap1) from Mus musculus (Mouse).